The primary structure comprises 155 residues: Sec-independent protein translocase protein TatB (155 aa).

The chain crosses the membrane as a helical span at residues Met-1 to Gly-21. Disordered regions lie at residues Ala-81 to Phe-103 and Ser-131 to Ala-155. The span at Ser-89–Asp-98 shows a compositional bias: polar residues.

Belongs to the TatB family. In terms of assembly, the Tat system comprises two distinct complexes: a TatABC complex, containing multiple copies of TatA, TatB and TatC subunits, and a separate TatA complex, containing only TatA subunits. Substrates initially bind to the TatABC complex, which probably triggers association of the separate TatA complex to form the active translocon.

It is found in the cell inner membrane. Functionally, part of the twin-arginine translocation (Tat) system that transports large folded proteins containing a characteristic twin-arginine motif in their signal peptide across membranes. Together with TatC, TatB is part of a receptor directly interacting with Tat signal peptides. TatB may form an oligomeric binding site that transiently accommodates folded Tat precursor proteins before their translocation. This chain is Sec-independent protein translocase protein TatB, found in Polaromonas naphthalenivorans (strain CJ2).